The following is a 442-amino-acid chain: tRNA-2-methylthio-N(6)-dimethylallyladenosine synthase (442 aa).

The 118-residue stretch at 5–122 (KKVFIKTLGC…LPEMIKQKQK (118 aa)) folds into the MTTase N-terminal domain. [4Fe-4S] cluster-binding residues include C14, C51, C85, C159, C163, and C166. Residues 145-378 (KAEGAKAYVS…DLLNSNAQII (234 aa)) form the Radical SAM core domain. Residues 380–442 (RQMVGTNQRI…LPNSLRGELI (63 aa)) form the TRAM domain.

Belongs to the methylthiotransferase family. MiaB subfamily. In terms of assembly, monomer. [4Fe-4S] cluster serves as cofactor.

Its subcellular location is the cytoplasm. The catalysed reaction is N(6)-dimethylallyladenosine(37) in tRNA + (sulfur carrier)-SH + AH2 + 2 S-adenosyl-L-methionine = 2-methylsulfanyl-N(6)-dimethylallyladenosine(37) in tRNA + (sulfur carrier)-H + 5'-deoxyadenosine + L-methionine + A + S-adenosyl-L-homocysteine + 2 H(+). Its function is as follows. Catalyzes the methylthiolation of N6-(dimethylallyl)adenosine (i(6)A), leading to the formation of 2-methylthio-N6-(dimethylallyl)adenosine (ms(2)i(6)A) at position 37 in tRNAs that read codons beginning with uridine. This chain is tRNA-2-methylthio-N(6)-dimethylallyladenosine synthase, found in Francisella tularensis subsp. holarctica (strain FTNF002-00 / FTA).